The primary structure comprises 387 residues: MTVLKMTDLDLKGKRVLIREDLNVPVKDGQVQSDARIKAALPTLKLALEKGAAVMVCSHLGRPTEGEFSAENSLKPVAEYLSKALGREVPLLADYLDGVEVKAGDLVLFENVRFNKGEKKNADELAQKYAALCDVFVMDAFGTAHRAEGSTHGVARFAKVAAAGPLLAAELDALGKALGNPARPMAAIVAGSKVSTKLDVLNSLAGICDQLIVGGGIANTFLAAAGHKVGKSLYEADLVETAKAIAAKVKVPLPVDVVVAKEFAESAVATVKAIAEVADDDMILDIGPQTAAQFAELLKTSKTILWNGPVGVFEFDQFGEGTRTLANAIADSAAFSIAGGGDTLAAIDKYGIAERISYISTGGGAFLEFVEGKVLPAVEILEQRAKG.

Substrate is bound by residues 21–23 (DLN), Arg36, 59–62 (HLGR), Arg113, and Arg146. Residues Lys197, Glu314, and 340 to 343 (GGDT) each bind ATP.

The protein belongs to the phosphoglycerate kinase family. As to quaternary structure, monomer.

It is found in the cytoplasm. The enzyme catalyses (2R)-3-phosphoglycerate + ATP = (2R)-3-phospho-glyceroyl phosphate + ADP. Its pathway is carbohydrate degradation; glycolysis; pyruvate from D-glyceraldehyde 3-phosphate: step 2/5. The polypeptide is Phosphoglycerate kinase (Pseudomonas aeruginosa (strain ATCC 15692 / DSM 22644 / CIP 104116 / JCM 14847 / LMG 12228 / 1C / PRS 101 / PAO1)).